A 41-amino-acid polypeptide reads, in one-letter code: Large ribosomal subunit protein bL36 (41 aa).

Belongs to the bacterial ribosomal protein bL36 family.

This is Large ribosomal subunit protein bL36 from Ruegeria sp. (strain TM1040) (Silicibacter sp.).